A 334-amino-acid chain; its full sequence is Ornithine carbamoyltransferase (334 aa).

Residues 57–60 (STRT), Q84, R108, and 135–138 (HPTQ) contribute to the carbamoyl phosphate site. L-ornithine is bound by residues N169, D233, and 237 to 238 (SM). Residues 275 to 276 (CL) and R320 contribute to the carbamoyl phosphate site.

It belongs to the aspartate/ornithine carbamoyltransferase superfamily. OTCase family.

It is found in the cytoplasm. It catalyses the reaction carbamoyl phosphate + L-ornithine = L-citrulline + phosphate + H(+). The protein operates within amino-acid biosynthesis; L-arginine biosynthesis; L-arginine from L-ornithine and carbamoyl phosphate: step 1/3. Its function is as follows. Reversibly catalyzes the transfer of the carbamoyl group from carbamoyl phosphate (CP) to the N(epsilon) atom of ornithine (ORN) to produce L-citrulline. The polypeptide is Ornithine carbamoyltransferase (Aliivibrio fischeri (strain ATCC 700601 / ES114) (Vibrio fischeri)).